The primary structure comprises 426 residues: L-cysteine:1D-myo-inositol 2-amino-2-deoxy-alpha-D-glucopyranoside ligase (426 aa).

Cys45 contributes to the Zn(2+) binding site. Residues 45–48 (CGIT), Thr60, and 83–85 (NVT) each bind L-cysteinyl-5'-AMP. Residues 47–57 (ITPYDATHIGH) carry the 'HIGH' region motif. The 'ERGGDP' region motif lies at 199–204 (ERGGDP). Trp239 provides a ligand contact to L-cysteinyl-5'-AMP. Zn(2+) is bound at residue Cys243. An L-cysteinyl-5'-AMP-binding site is contributed by 261 to 263 (GSD). His268 is a binding site for Zn(2+). An L-cysteinyl-5'-AMP-binding site is contributed by Val294. A 'KMSKS' region motif is present at residues 300 to 304 (KMSKS).

The protein belongs to the class-I aminoacyl-tRNA synthetase family. MshC subfamily. Monomer. Zn(2+) is required as a cofactor.

It catalyses the reaction 1D-myo-inositol 2-amino-2-deoxy-alpha-D-glucopyranoside + L-cysteine + ATP = 1D-myo-inositol 2-(L-cysteinylamino)-2-deoxy-alpha-D-glucopyranoside + AMP + diphosphate + H(+). Catalyzes the ATP-dependent condensation of GlcN-Ins and L-cysteine to form L-Cys-GlcN-Ins. The sequence is that of L-cysteine:1D-myo-inositol 2-amino-2-deoxy-alpha-D-glucopyranoside ligase from Clavibacter michiganensis subsp. michiganensis (strain NCPPB 382).